Consider the following 346-residue polypeptide: Threonylcarbamoyl-AMP synthase (346 aa).

A YrdC-like domain is found at 18–205 (DPQIAQAAAL…IPVLLRPGGI (188 aa)). Thr40 lines the L-threonine pocket. ATP contacts are provided by Arg63 and Asn67. His72 contacts L-threonine. Thr123 lines the ATP pocket. L-threonine is bound by residues Arg127 and Ala147. 2 residues coordinate ATP: Ser149 and Ser157. Residue Ser187 coordinates L-threonine. ATP is bound by residues Arg201 and Tyr240.

This sequence belongs to the SUA5 family.

It is found in the cytoplasm. It catalyses the reaction L-threonine + hydrogencarbonate + ATP = L-threonylcarbamoyladenylate + diphosphate + H2O. Functionally, required for the formation of a threonylcarbamoyl group on adenosine at position 37 (t(6)A37) in tRNAs that read codons beginning with adenine. Catalyzes the conversion of L-threonine, HCO(3)(-)/CO(2) and ATP to give threonylcarbamoyl-AMP (TC-AMP) as the acyladenylate intermediate, with the release of diphosphate. Is also able to catalyze the reverse reaction in vitro, i.e. the formation of ATP from TC-AMP and PPi. This Bacillus subtilis (strain 168) protein is Threonylcarbamoyl-AMP synthase (ywlC).